Here is a 156-residue protein sequence, read N- to C-terminus: Myosin, essential light chain, adductor muscle (156 aa).

EF-hand domains follow at residues D6 to N43 and G81 to R116.

Its function is as follows. In molluscan muscle, calcium regulation is associated with myosin rather than with actin. Muscle myosin contains two types of light chains: the catalytic light chain, essential for ATPase activity, and the regulatory light chain, a calcium-binding protein responsible for Ca(2+) dependent binding and Ca(2+) dependent Mg-ATPase activity. The protein is Myosin, essential light chain, adductor muscle of Mizuhopecten yessoensis (Japanese scallop).